Reading from the N-terminus, the 758-residue chain is 5-methyltetrahydropteroyltriglutamate--homocysteine methyltransferase (758 aa).

5-methyltetrahydropteroyltri-L-glutamate is bound by residues 17–20 (RELK) and lysine 117. Residues 434-436 (IGS) and glutamate 487 each bind L-homocysteine. Residues 434 to 436 (IGS) and glutamate 487 contribute to the L-methionine site. 5-methyltetrahydropteroyltri-L-glutamate contacts are provided by residues 518–519 (RC) and tryptophan 564. Residue aspartate 602 participates in L-homocysteine binding. Aspartate 602 contributes to the L-methionine binding site. Glutamate 608 is a 5-methyltetrahydropteroyltri-L-glutamate binding site. Zn(2+) is bound by residues histidine 644, cysteine 646, and glutamate 668. Histidine 697 acts as the Proton donor in catalysis. Residue cysteine 729 participates in Zn(2+) binding.

This sequence belongs to the vitamin-B12 independent methionine synthase family. The cofactor is Zn(2+).

It catalyses the reaction 5-methyltetrahydropteroyltri-L-glutamate + L-homocysteine = tetrahydropteroyltri-L-glutamate + L-methionine. The protein operates within amino-acid biosynthesis; L-methionine biosynthesis via de novo pathway; L-methionine from L-homocysteine (MetE route): step 1/1. In terms of biological role, catalyzes the transfer of a methyl group from 5-methyltetrahydrofolate to homocysteine resulting in methionine formation. The polypeptide is 5-methyltetrahydropteroyltriglutamate--homocysteine methyltransferase (Yersinia pseudotuberculosis serotype I (strain IP32953)).